The chain runs to 206 residues: LexA repressor (206 aa).

Residues 28 to 48 constitute a DNA-binding region (H-T-H motif); sequence RAEIARELGFRSANAAEEHLK. Active-site for autocatalytic cleavage activity residues include serine 123 and lysine 160.

Belongs to the peptidase S24 family. Homodimer.

The catalysed reaction is Hydrolysis of Ala-|-Gly bond in repressor LexA.. Functionally, represses a number of genes involved in the response to DNA damage (SOS response), including recA and lexA. In the presence of single-stranded DNA, RecA interacts with LexA causing an autocatalytic cleavage which disrupts the DNA-binding part of LexA, leading to derepression of the SOS regulon and eventually DNA repair. The sequence is that of LexA repressor from Vibrio campbellii (strain ATCC BAA-1116).